Reading from the N-terminus, the 184-residue chain is UPF0398 protein OB1025 (184 aa).

The protein belongs to the UPF0398 family.

This Oceanobacillus iheyensis (strain DSM 14371 / CIP 107618 / JCM 11309 / KCTC 3954 / HTE831) protein is UPF0398 protein OB1025.